The chain runs to 248 residues: Probable transcriptional regulatory protein Plav_2114 (248 aa).

The protein belongs to the TACO1 family.

Its subcellular location is the cytoplasm. This Parvibaculum lavamentivorans (strain DS-1 / DSM 13023 / NCIMB 13966) protein is Probable transcriptional regulatory protein Plav_2114.